Here is a 562-residue protein sequence, read N- to C-terminus: uncharacterized protein (562 aa).

5 helical membrane-spanning segments follow: residues 15-34 (WGGG…AFGI), 41-63 (VAGI…HFNL), 78-97 (LILF…FSAF), 104-126 (LNML…HFIT), and 165-187 (IALG…LLGL). 2 consecutive RCK C-terminal domains span residues 204 to 286 (QGLG…ITAF) and 289 to 374 (KPIE…VLGN). 6 helical membrane passes run 384 to 403 (LIPI…IPFM), 413 to 430 (LGLA…SRFG), 450 to 472 (IGIS…ETII), 476 to 498 (GYVW…GFIG), 505 to 524 (NYYT…PALA), and 539 to 561 (YATV…ILSL).

It belongs to the AAE transporter (TC 2.A.81) family.

Its subcellular location is the cell membrane. This is an uncharacterized protein from Bacteroides fragilis (strain YCH46).